We begin with the raw amino-acid sequence, 328 residues long: Arabinose 5-phosphate isomerase KdsD (328 aa).

The 143-residue stretch at 42-184 folds into the SIS domain; sequence CEKMFWCKGK…AVALLKARGF (143 aa). Substrate is bound by residues 75–76, His82, His88, 114–123, 148–150, Thr222, and Asp275; these read GT, ALIPVLKRLH, and KVA. His82 lines the Zn(2+) pocket. The region spanning 210–268 is the CBS 1 domain; the sequence is MHTGDEIPHVKKTASLRDALLEVTRKNLGMTVICDDNMMIEGIFTDGDLRRVFDMGVDV. Positions 277–328 constitute a CBS 2 domain; that stretch reads MTPGGIRVRPGILAVEALNLMQSRHITSVMVADGDHLLGVLHMHDLLRAGVV.

Belongs to the SIS family. GutQ/KpsF subfamily. Homotetramer.

The enzyme catalyses D-arabinose 5-phosphate = D-ribulose 5-phosphate. The protein operates within carbohydrate biosynthesis; 3-deoxy-D-manno-octulosonate biosynthesis; 3-deoxy-D-manno-octulosonate from D-ribulose 5-phosphate: step 1/3. It functions in the pathway bacterial outer membrane biogenesis; lipopolysaccharide biosynthesis. Functionally, involved in the biosynthesis of 3-deoxy-D-manno-octulosonate (KDO), a unique 8-carbon sugar component of lipopolysaccharides (LPSs). Catalyzes the reversible aldol-ketol isomerization between D-ribulose 5-phosphate (Ru5P) and D-arabinose 5-phosphate (A5P). The chain is Arabinose 5-phosphate isomerase KdsD (kdsD) from Shigella flexneri.